We begin with the raw amino-acid sequence, 335 residues long: MDARAREAAETSGPGLPLAVRELLAGGVAGGVAKTAVAPLERVKILFQTRRAEFHGSGLIGSFRTIYRTEGLLGFYRGNGASVARIVPYAALHYMAYEEYRRWIILGFPNVEQGPVLDLVAGSIAGGTAVICTYPLDLVRTKLAYQVKGAVSVGFRESKPSEQVYKGIMDCVKTIYRQNGLKGIYRGMAPSLYGIFPYSGLKFYFYEKMKSHVPEEHRKGIIAKLGCGSVAGLLGQTITYPLDVVRRQMQVQALSSSSLVGRGTFESLVMIAKQQGWRQLFSGLSINYLKVVPSVAIGFTVYDSMKVCLKVPSREETAVAVLAEERSNTAPIPSS.

6 helical membrane passes run 12–32 (SGPG…AGGV), 75–95 (FYRG…LHYM), 119–139 (LVAG…LDLV), 187–207 (GMAP…YFYE), 225–242 (LGCG…TYPL), and 280–302 (LFSG…FTVY). Solcar repeat units follow at residues 17–103 (PLAV…YRRW), 113–212 (QGPV…MKSH), and 219–308 (KGII…MKVC).

It belongs to the mitochondrial carrier (TC 2.A.29) family. Expressed throughout the plant.

It localises to the mitochondrion inner membrane. Its function is as follows. Required for the accumulation of coenzyme A in the mitochondrial matrix. This chain is Mitochondrial carrier protein CoAc2, found in Zea mays (Maize).